A 478-amino-acid polypeptide reads, in one-letter code: Noelin-3 (478 aa).

An N-terminal signal peptide occupies residues 1 to 23 (MSAPLLKLGAVLSTMAMISNWMS). Residues N33, N95, N179, N299, and N465 are each glycosylated (N-linked (GlcNAc...) asparagine). Positions 77–217 (CSRDAKSRQL…TRLRDCMKKL (141 aa)) form a coiled coil. The Olfactomedin-like domain maps to 218-470 (TCGKLMKITG…QVLFNVTLFH (253 aa)). A disulfide bridge connects residues C219 and C401.

Peripherally associated with AMPAR complex. AMPAR complex consists of an inner core made of 4 pore-forming GluA/GRIA proteins (GRIA1, GRIA2, GRIA3 and GRIA4) and 4 major auxiliary subunits arranged in a twofold symmetry. One of the two pairs of distinct binding sites is occupied either by CNIH2, CNIH3 or CACNG2, CACNG3. The other harbors CACNG2, CACNG3, CACNG4, CACNG8 or GSG1L. This inner core of AMPAR complex is complemented by outer core constituents binding directly to the GluA/GRIA proteins at sites distinct from the interaction sites of the inner core constituents. Outer core constituents include at least PRRT1, PRRT2, CKAMP44/SHISA9, FRRS1L and NRN1. The proteins of the inner and outer core serve as a platform for other, more peripherally associated AMPAR constituents, including OLFM3. Alone or in combination, these auxiliary subunits control the gating and pharmacology of the AMPAR complex and profoundly impact their biogenesis and protein processing. Homodimer. Interacts with MYOC. Interacts with OLFM2. In terms of tissue distribution, expressed in the brain (at protein level). Also expressed in the retina, mainly in the ganglion cell layer and in the amacrine cell subregion of the inner nuclear layer. Expressed at high levels in the epithelial cells of the posterior iris and the ciliary body and, at lower levels, in the trabecular meshwork. Isoform 2 preferentially expressed in retina and brain, while isoform 1 preferentially expressed in the tissues of the eye angle.

Its subcellular location is the secreted. It localises to the synapse. The protein is Noelin-3 (Olfm3) of Rattus norvegicus (Rat).